Here is a 223-residue protein sequence, read N- to C-terminus: Coiled-coil domain-containing protein 70 (223 aa).

Positions 129–153 (NALWERDRNLLQEDKALWEEEKALW) form a coiled coil. The segment at 199–223 (EQRHQNGPYNANEEPQSTSFPRGRA) is disordered. Residues 203–223 (QNGPYNANEEPQSTSFPRGRA) are compositionally biased toward polar residues.

This Mus musculus (Mouse) protein is Coiled-coil domain-containing protein 70.